The chain runs to 119 residues: Probable non-functional T cell receptor gamma variable 11 (119 aa).

Positions 1–18 (MPLVVAVIFFSLWVFALG) are cleaved as a signal peptide. The Ig-like domain maps to 23–119 (PEISISRPAN…VYHCACWIRH (97 aa)). Asn-32 carries N-linked (GlcNAc...) asparagine glycosylation.

As to quaternary structure, most probably, the gamma-delta TR is not assembled due to incorrect folding of the gamma chain. Gamma-delta TR is a heterodimer composed of a gamma and delta chain; disulfide-linked. The gamma-delta TR is associated with the transmembrane signaling CD3 coreceptor proteins following the stoichiometry: a single gamma-delta TR heterodimer associates with one CD3D-CD3E heterodimer, one CD3G-CD3E heterodimer and one CD247 homodimer forming a stable octameric structure. Upon activation, gamma-delta TR complex associates with FCER1G to initiate intracellular signaling.

It is found in the cell membrane. Probable non-functional open reading frame (ORF) of V region of the variable domain of T cell receptor (TR) gamma chain. Non-functional ORF generally cannot participate in the synthesis of a productive T cell receptor (TR) chain due to altered V-(D)-J or switch recombination and/or splicing site (at mRNA level) and/or conserved amino acid change (protein level). Gamma-delta TRs recognize a variety of self and foreign non-peptide antigens frequently expressed at the epithelial boundaries between the host and external environment, including endogenous lipids presented by MH-like protein CD1D and phosphoantigens presented by butyrophilin-like molecule BTN3A1. Upon antigen recognition induces rapid, innate-like immune responses involved in pathogen clearance and tissue repair. Binding of gamma-delta TR complex to antigen triggers phosphorylation of immunoreceptor tyrosine-based activation motifs (ITAMs) in the CD3 chains by the LCK and FYN kinases, allowing the recruitment, phosphorylation, and activation of ZAP70 that facilitates phosphorylation of the scaffolding proteins LCP2 and LAT. This lead to the formation of a supramolecular signalosome that recruits the phospholipase PLCG1, resulting in calcium mobilization and ERK activation, ultimately leading to T cell expansion and differentiation into effector cells. Gamma-delta TRs are produced through somatic rearrangement of a limited repertoire of variable (V), diversity (D), and joining (J) genes. The potential diversity of gamma-delta TRs is conferred by the unique ability to rearrange (D) genes in tandem and to utilize all three reading frames. The combinatorial diversity is considerably increased by the sequence exonuclease trimming and random nucleotide (N) region additions which occur during the V-(D)-J rearrangements. This chain is Probable non-functional T cell receptor gamma variable 11, found in Homo sapiens (Human).